A 515-amino-acid polypeptide reads, in one-letter code: 1-pyrroline-5-carboxylate dehydrogenase 2 (515 aa).

Active-site residues include Glu-286 and Cys-320.

This sequence belongs to the aldehyde dehydrogenase family. RocA subfamily.

It carries out the reaction L-glutamate 5-semialdehyde + NAD(+) + H2O = L-glutamate + NADH + 2 H(+). The protein operates within amino-acid degradation; L-proline degradation into L-glutamate; L-glutamate from L-proline: step 2/2. In terms of biological role, important for the use of proline as a sole carbon and energy source or a sole nitrogen source. This Bacillus subtilis (strain 168) protein is 1-pyrroline-5-carboxylate dehydrogenase 2.